The primary structure comprises 356 residues: Chitin elicitor-binding protein (356 aa).

The first 28 residues, Met1–Ala28, serve as a signal peptide directing secretion. N-linked (GlcNAc...) asparagine glycosylation occurs at Asn30. Disulfide bonds link Cys33–Cys100, Cys41–Cys164, Cys98–Cys162, and Cys100–Cys164. Pro50 to Asn51 is a binding site for chitin. 2 N-linked (GlcNAc...) asparagine glycosylation sites follow: Asn63 and Asn89. LysM domains are found at residues Pro111–Ile158 and Leu175–Val219. Chitin contacts are provided by residues Pro117–Ala123, Asn142, Pro145–Val152, Thr155, and Gly182. N-linked (GlcNAc...) asparagine glycosylation is present at Asn151. Asn184 carries an N-linked (GlcNAc...) asparagine glycan. Chitin contacts are provided by residues Ser186 and Leu211 to Met213. Disulfide bonds link Cys224–Cys257 and Cys252–Cys274. N-linked (GlcNAc...) asparagine glycans are attached at residues Asn265, Asn281, Asn290, Asn306, and Asn319. The chain crosses the membrane as a helical span at residues Arg336 to Leu356.

In terms of assembly, forms homooligomer. Interacts with CERK1. Binds to chitin oligosaccharide elicitor. Interacts with LYP4 and LYP6. N-glycosylated. Expressed in seedlings, roots, shoots, stems and flowers.

The protein localises to the cell membrane. Functionally, chitin elicitor-binding protein involved in the perception and transduction of chitin oligosaccharide elicitor signal for defense responses. The chain is Chitin elicitor-binding protein from Oryza sativa subsp. japonica (Rice).